The sequence spans 31 residues: Hemocyanin subunit 2 (31 aa).

Belongs to the tyrosinase family. Hemocyanin subfamily. In terms of tissue distribution, hemolymph.

Its subcellular location is the secreted. The protein localises to the extracellular space. In terms of biological role, hemocyanins are copper-containing oxygen carriers occurring freely dissolved in the hemolymph of many mollusks and arthropods. The protein is Hemocyanin subunit 2 of Maja squinado (Mediterranean spider crab).